The following is a 227-amino-acid chain: Probable methylthioribulose-1-phosphate dehydratase (227 aa).

Cysteine 87 is a substrate binding site. Residues histidine 105 and histidine 107 each contribute to the Zn(2+) site. Glutamate 129 (proton donor/acceptor) is an active-site residue. Histidine 185 is a Zn(2+) binding site.

This sequence belongs to the aldolase class II family. MtnB subfamily. Zn(2+) is required as a cofactor.

It localises to the cytoplasm. It catalyses the reaction 5-(methylsulfanyl)-D-ribulose 1-phosphate = 5-methylsulfanyl-2,3-dioxopentyl phosphate + H2O. Its pathway is amino-acid biosynthesis; L-methionine biosynthesis via salvage pathway; L-methionine from S-methyl-5-thio-alpha-D-ribose 1-phosphate: step 2/6. Functionally, catalyzes the dehydration of methylthioribulose-1-phosphate (MTRu-1-P) into 2,3-diketo-5-methylthiopentyl-1-phosphate (DK-MTP-1-P). This chain is Probable methylthioribulose-1-phosphate dehydratase, found in Drosophila melanogaster (Fruit fly).